The primary structure comprises 226 residues: MAGQSDRKAALLDQVARVGKALANGRRLQILDLLAQGERAVEAIATATGMNLTTASANLQALKSGGLVEARREGTRQYYRIAGEDVARLFALVQVVADEHLADVAVAAADVLGSPEDAITRAELLRRREAGEVTLVDVRPHEEYQAGHIPGAINIPIAELADRLAELTGDRDIVAYCRGAYCVMAPDAVRIARDAGREVKRLDDGMLEWRLAGLPVDEGAPVGHGD.

Residues 7–101 (RKAALLDQVA…LVQVVADEHL (95 aa)) enclose the HTH arsR-type domain. Positions 41-64 (VEAIATATGMNLTTASANLQALKS) form a DNA-binding region, H-T-H motif. In terms of domain architecture, Rhodanese spans 129–218 (EAGEVTLVDV…WRLAGLPVDE (90 aa)). Cys-177 serves as the catalytic Cysteine persulfide intermediate.

Functionally, part of a regulatory network that coordinates tolerance to the antitubercular drug bedaquiline. The protein is HTH-type transcriptional regulator Rv0324 of Mycobacterium tuberculosis (strain ATCC 25618 / H37Rv).